The sequence spans 338 residues: Fructose-1,6-bisphosphatase 1 (338 aa).

Position 2 is an N-acetylalanine (Ala2). AMP-binding positions include Val18 to Gly22 and Thr28 to Thr32. Positions 69 and 98 each coordinate Mg(2+). Lys113–Tyr114 contributes to the AMP binding site. Mg(2+) contacts are provided by Asp119, Leu121, and Asp122. Asp122–Ser125 serves as a coordination point for substrate. Arg141 lines the AMP pocket. An N6-succinyllysine modification is found at Lys151. Substrate is bound by residues Asn213–Tyr216, Arg244–Met249, Tyr265, and Lys275–Arg277. Phosphotyrosine occurs at positions 216, 245, and 265. Glu281 contacts Mg(2+).

This sequence belongs to the FBPase class 1 family. Homotetramer. Mg(2+) is required as a cofactor. As to expression, expressed in pancreatic islets.

It catalyses the reaction beta-D-fructose 1,6-bisphosphate + H2O = beta-D-fructose 6-phosphate + phosphate. It participates in carbohydrate biosynthesis; gluconeogenesis. With respect to regulation, subject to complex allosteric regulation. The enzyme can assume an active R-state, or an inactive T-state. Intermediate conformations may exist. AMP acts as an allosteric inhibitor. AMP binding affects the turnover of bound substrate and not the affinity for substrate. Fructose 2,6-bisphosphate acts as a competitive inhibitor. Fructose 2,6-bisphosphate and AMP have synergistic effects. Catalyzes the hydrolysis of fructose 1,6-bisphosphate to fructose 6-phosphate in the presence of divalent cations, acting as a rate-limiting enzyme in gluconeogenesis. Plays a role in regulating glucose sensing and insulin secretion of pancreatic beta-cells. Appears to modulate glycerol gluconeogenesis in liver. Important regulator of appetite and adiposity; increased expression of the protein in liver after nutrient excess increases circulating satiety hormones and reduces appetite-stimulating neuropeptides and thus seems to provide a feedback mechanism to limit weight gain. The chain is Fructose-1,6-bisphosphatase 1 (FBP1) from Homo sapiens (Human).